Consider the following 465-residue polypeptide: Protein hedgehog (465 aa).

C79 is lipidated: N-palmitoyl cysteine. Ca(2+)-binding residues include E143, E144, D149, T179, E180, D183, and D185. G251 carries the Cholesterol glycine ester lipid modification.

The protein belongs to the hedgehog family. As to quaternary structure, interacts with shf. The C-terminal part of the hedgehog protein precursor displays an autoproteolysis activity that results in the cleavage of the full-length protein into two parts (N-product and C-product). In addition, the C-terminal part displays a cholesterol transferase activity that results by the covalent attachment of a cholesterol moiety to the C-terminal of the newly generated N-product. The N-product is the active species in both local and long-range signaling, whereas the C-product has no signaling activity. In terms of processing, cholesterylation is required for N-product targeting to lipid rafts and multimerization. Post-translationally, N-palmitoylation by Rasp of the hedgehog N-product, within the secretory pathway, is required for the embryonic and larval patterning activities of the hedgehog signal.

It is found in the nucleus. It localises to the cytoplasm. Its subcellular location is the cell membrane. The catalysed reaction is glycyl-L-cysteinyl-[protein] + cholesterol + H(+) = [protein]-C-terminal glycyl cholesterol ester + N-terminal L-cysteinyl-[protein]. Functionally, the C-terminal part of the hedgehog protein precursor displays an autoproteolysis activity that results in the cleavage of the full-length protein into two parts (N-product and C-product). In addition, the C-terminal part displays a cholesterol transferase activity that results by the covalent attachment of a cholesterol moiety to the C-terminal of the newly generated N-product. Once cleaved, the C-product has no signaling activity and diffuses from the cell. The dually lipidated hedgehog protein N-product is a morphogen which is essential for a variety of patterning events during development. Establishes the anterior-posterior axis of the embryonic segments and patterns the larval imaginal disks. Binds to the patched (ptc) receptor, which functions in association with smoothened (smo), to activate the transcription of target genes wingless (wg), decapentaplegic (dpp) and ptc. In the absence of hh, ptc represses the constitutive signaling activity of smo through fused (fu). Essential component of a signaling pathway which regulates the Duox-dependent gut immune response to bacterial uracil; required to activate Cad99C-dependent endosome formation, norpA-dependent Ca2+ mobilization and p38 MAPK, which are essential steps in the Duox-dependent production of reactive oxygen species (ROS) in response to intestinal bacterial infection. During photoreceptor differentiation, it up-regulates transcription of Ubr3, which in turn promotes the hh-signaling pathway by mediating the ubiquitination and degradation of cos. The chain is Protein hedgehog from Drosophila yakuba (Fruit fly).